A 557-amino-acid chain; its full sequence is Protein Red (557 aa).

A disordered region spans residues 1–90 (MPERDSEPFS…YAKLRQQEIE (90 aa)). The span at 16–25 (DGHDVDDPHS) shows a compositional bias: basic and acidic residues. Over residues 42–53 (TPRAAPTSAPPS) the composition is skewed to low complexity. An N6-acetyllysine mark is found at lysine 98 and lysine 137. Residue lysine 151 forms a Glycyl lysine isopeptide (Lys-Gly) (interchain with G-Cter in SUMO2) linkage. The interval 181-205 (KEKEEEELMEKPQKETKKDEDPENK) is disordered. Serine 287 is subject to Phosphoserine. Positions 294 to 303 (RNKKLKKKDK) are enriched in basic residues. Positions 294–402 (RNKKLKKKDK…PMDVDKGPGS (109 aa)) are disordered. The segment covering 304–313 (GKLEEKKPPE) has biased composition (basic and acidic residues). Residues lysine 310 and lysine 331 each participate in a glycyl lysine isopeptide (Lys-Gly) (interchain with G-Cter in SUMO2) cross-link. Positions 332–398 (TPRDKERERY…VDDEPMDVDK (67 aa)) are enriched in basic and acidic residues. Tandem repeats lie at residues 342 to 343 (RE), 344 to 345 (RE), 346 to 347 (RD), 348 to 349 (RE), 350 to 351 (RD), 352 to 353 (RD), 354 to 355 (RE), 356 to 357 (RD), 358 to 359 (RE), 360 to 361 (RD), 362 to 363 (RE), 364 to 365 (RE), 366 to 367 (RE), 368 to 369 (RD), 370 to 371 (RE), 372 to 373 (RE), and 374 to 375 (RE). Residues 342-375 (RERERDRERDRDRERDRERDRERERERDRERERE) are 17 X 2 AA tandem repeats of R-[ED]. Glycyl lysine isopeptide (Lys-Gly) (interchain with G-Cter in SUMO2) cross-links involve residues lysine 386, lysine 388, lysine 404, and lysine 408. Phosphoserine is present on residues serine 417 and serine 460. The residue at position 485 (threonine 485) is a Phosphothreonine. Residues lysine 496, lysine 501, and lysine 509 each participate in a glycyl lysine isopeptide (Lys-Gly) (interchain with G-Cter in SUMO2) cross-link. A Phosphoserine modification is found at serine 536. Residues lysine 541, lysine 543, lysine 544, and lysine 553 each participate in a glycyl lysine isopeptide (Lys-Gly) (interchain with G-Cter in SUMO2) cross-link.

It belongs to the RED family. Component of the spliceosome B complex. Interacts with SMU1. Interacts with MAD1L1. May interact with DHX15.

It localises to the nucleus. Its subcellular location is the nucleoplasm. The protein localises to the chromosome. It is found in the cytoplasm. The protein resides in the cytoskeleton. It localises to the spindle pole. Involved in pre-mRNA splicing as a component of the spliceosome. Auxiliary spliceosomal protein that regulates selection of alternative splice sites in a small set of target pre-mRNA species. Required for normal mitotic cell cycle progression. Recruits MAD1L1 and MAD2L1 to kinetochores, and is required to trigger the spindle assembly checkpoint. Required for normal accumulation of SMU1. The sequence is that of Protein Red (Ik) from Rattus norvegicus (Rat).